The primary structure comprises 256 residues: Small ribosomal subunit protein eS1 (256 aa).

Over residues 1-18 the composition is skewed to basic residues; the sequence is MAVGKNKRLSKGKKGLKK. Positions 1-20 are disordered; that stretch reads MAVGKNKRLSKGKKGLKKKA. Ala-2 carries the N-acetylalanine; partial modification.

It belongs to the eukaryotic ribosomal protein eS1 family. In terms of assembly, component of the small ribosomal subunit. Mature ribosomes consist of a small (40S) and a large (60S) subunit. The 40S subunit contains about 33 different proteins and 1 molecule of RNA (18S). The 60S subunit contains about 49 different proteins and 3 molecules of RNA (25S, 5.8S and 5S).

The protein resides in the cytoplasm. This chain is Small ribosomal subunit protein eS1, found in Podospora anserina (strain S / ATCC MYA-4624 / DSM 980 / FGSC 10383) (Pleurage anserina).